We begin with the raw amino-acid sequence, 128 residues long: Flagellar basal body rod protein FlgB (128 aa).

This sequence belongs to the flagella basal body rod proteins family. As to quaternary structure, the basal body constitutes a major portion of the flagellar organelle and consists of a number of rings mounted on a central rod. In Gram-negative bacteria, at least four rings, L, P, S and M are present, whereas Gram-positive bacteria lack the L and P rings. The rod consists of about 26 subunits of FlgG in the distal portion, and FlgB, FlgC and FlgF build up the proximal portion of the rod with about 6 subunits each. Rod assembly occurs by export via the flagellum-specific pathway of its constituent proteins and by their incorporation into the rod structure in the probable order of FlgB, FlgC, FlgF and FlgG. Another protein, FliE, also assembles onto the stable rod structure.

It localises to the bacterial flagellum basal body. Functionally, structural component of flagellum, the bacterial motility apparatus. Part of the rod structure of flagellar basal body. The polypeptide is Flagellar basal body rod protein FlgB (Cereibacter sphaeroides (strain ATCC 17023 / DSM 158 / JCM 6121 / CCUG 31486 / LMG 2827 / NBRC 12203 / NCIMB 8253 / ATH 2.4.1.) (Rhodobacter sphaeroides)).